The sequence spans 287 residues: Histone H1 (287 aa).

The span at 1–11 shows a compositional bias: low complexity; it reads MATEEPVIVNE. 2 disordered regions span residues 1–58 and 120–287; these read MATE…THPP and YKLP…RGRK. Basic residues predominate over residues 33 to 51; the sequence is GKAKKETKAKKPAAPRKRS. In terms of domain architecture, H15 spans 55 to 124; sequence THPPYFEMIK…KVKNSYKLPS (70 aa). Residues 135 to 202 show a composition bias toward basic residues; that stretch reads AKKKPAAAKS…KAKPVAKAKP (68 aa). Residues 203-248 are compositionally biased toward low complexity; the sequence is KAAAAAKPKAAVKPKAAPAKTKAAVKPNLKAKTTTAKVAKTATRTT. Basic residues predominate over residues 276 to 287; sequence PAKKATPKRGRK.

This sequence belongs to the histone H1/H5 family.

Its subcellular location is the nucleus. It is found in the chromosome. Functionally, histones H1 are necessary for the condensation of nucleosome chains into higher-order structures. This Solanum lycopersicum (Tomato) protein is Histone H1.